The following is a 511-amino-acid chain: ATP synthase subunit beta, mitochondrial (511 aa).

A mitochondrion-targeting transit peptide spans Met-1 to Met-33. Position 112 is a phosphothreonine (Thr-112). Residue Gly-190–Thr-197 coordinates ATP. Thr-237 carries the post-translational modification Phosphothreonine. Ser-373 carries the post-translational modification Phosphoserine.

Belongs to the ATPase alpha/beta chains family. F-type ATPases have 2 components, CF(1) - the catalytic core - and CF(0) - the membrane proton channel. CF(1) has five subunits: alpha(3), beta(3), gamma(1), delta(1), epsilon(1). CF(0) has three main subunits: a, b and c.

The protein resides in the mitochondrion. It is found in the mitochondrion inner membrane. The enzyme catalyses ATP + H2O + 4 H(+)(in) = ADP + phosphate + 5 H(+)(out). Its function is as follows. Mitochondrial membrane ATP synthase (F(1)F(0) ATP synthase or Complex V) produces ATP from ADP in the presence of a proton gradient across the membrane which is generated by electron transport complexes of the respiratory chain. F-type ATPases consist of two structural domains, F(1) - containing the extramembraneous catalytic core, and F(0) - containing the membrane proton channel, linked together by a central stalk and a peripheral stalk. During catalysis, ATP synthesis in the catalytic domain of F(1) is coupled via a rotary mechanism of the central stalk subunits to proton translocation. Subunits alpha and beta form the catalytic core in F(1). Rotation of the central stalk against the surrounding alpha(3)beta(3) subunits leads to hydrolysis of ATP in three separate catalytic sites on the beta subunits. This Saccharomyces cerevisiae (strain ATCC 204508 / S288c) (Baker's yeast) protein is ATP synthase subunit beta, mitochondrial (ATP2).